An 81-amino-acid polypeptide reads, in one-letter code: Acyl carrier protein (81 aa).

Residues 5–80 (EEIFSKVKSI…DIVSYIEKKL (76 aa)) form the Carrier domain. An O-(pantetheine 4'-phosphoryl)serine modification is found at Ser40.

The protein belongs to the acyl carrier protein (ACP) family. In terms of processing, 4'-phosphopantetheine is transferred from CoA to a specific serine of apo-ACP by AcpS. This modification is essential for activity because fatty acids are bound in thioester linkage to the sulfhydryl of the prosthetic group.

It localises to the cytoplasm. It functions in the pathway lipid metabolism; fatty acid biosynthesis. Its function is as follows. Carrier of the growing fatty acid chain in fatty acid biosynthesis. The polypeptide is Acyl carrier protein (Thermotoga maritima (strain ATCC 43589 / DSM 3109 / JCM 10099 / NBRC 100826 / MSB8)).